Here is a 472-residue protein sequence, read N- to C-terminus: Aspartyl/glutamyl-tRNA(Asn/Gln) amidotransferase subunit B (472 aa).

It belongs to the GatB/GatE family. GatB subfamily. In terms of assembly, heterotrimer of A, B and C subunits.

It catalyses the reaction L-glutamyl-tRNA(Gln) + L-glutamine + ATP + H2O = L-glutaminyl-tRNA(Gln) + L-glutamate + ADP + phosphate + H(+). The enzyme catalyses L-aspartyl-tRNA(Asn) + L-glutamine + ATP + H2O = L-asparaginyl-tRNA(Asn) + L-glutamate + ADP + phosphate + 2 H(+). Its function is as follows. Allows the formation of correctly charged Asn-tRNA(Asn) or Gln-tRNA(Gln) through the transamidation of misacylated Asp-tRNA(Asn) or Glu-tRNA(Gln) in organisms which lack either or both of asparaginyl-tRNA or glutaminyl-tRNA synthetases. The reaction takes place in the presence of glutamine and ATP through an activated phospho-Asp-tRNA(Asn) or phospho-Glu-tRNA(Gln). The polypeptide is Aspartyl/glutamyl-tRNA(Asn/Gln) amidotransferase subunit B (Campylobacter jejuni subsp. jejuni serotype O:2 (strain ATCC 700819 / NCTC 11168)).